The following is a 205-amino-acid chain: Sarcosine oxidase subunit gamma (205 aa).

The protein belongs to the SoxG family. Heterotetramer composed of subunits alpha (SoxA), beta (SoxB), gamma (SoxG) and delta (SoxD).

It is found in the cytoplasm. The catalysed reaction is sarcosine + (6S)-5,6,7,8-tetrahydrofolate + O2 = (6R)-5,10-methylene-5,6,7,8-tetrahydrofolate + glycine + H2O2. The enzyme catalyses sarcosine + O2 + H2O = formaldehyde + glycine + H2O2. Its activity is regulated as follows. Inhibited by Zn(2+), Cu(2+), Cd(2+), Hg(2+), Ag(+), p-chloromercuribenzoate (p-CMB), iodoacetamide, N-ethylmaleimide, CN(-), o-phenanthroline and sodium lauryl sulfate. Functionally, in the presence of tetrahydrofolate, catalyzes the oxidative demethylation of sarcosine to yield glycine, 5,10-methylenetetrahydrofolate and hydrogen peroxide. In the absence of tetrahydrofolate, catalyzes the oxidative demethylation of sarcosine to yield glycine, formaldehyde and hydrogen peroxide. Can also use N-methyl-L-alanine and N-ethyl-L-glycine. Is very specific for oxygen as an acceptor. The protein is Sarcosine oxidase subunit gamma of Corynebacterium sp. (strain U-96).